The sequence spans 200 residues: Small ribosomal subunit protein mS38 (200 aa).

It belongs to the mitochondrion-specific ribosomal protein mS38 family. As to quaternary structure, component of the mitochondrial ribosome small subunit (28S) which comprises a 12S rRNA and about 30 distinct proteins. Interacts with Aurora-A. As to expression, ubiquitously expressed and especially highly expressed in heart, skeletal muscle and testis.

It is found in the mitochondrion matrix. Its subcellular location is the nucleus. In terms of biological role, may act as a negative regulator of Aurora-A kinase, by down-regulation through proteasome-dependent degradation. In Mus musculus (Mouse), this protein is Small ribosomal subunit protein mS38 (Aurkaip1).